The chain runs to 248 residues: Ubiquinone biosynthesis O-methyltransferase (248 aa).

Arg-41, Gly-72, Asp-93, and Met-136 together coordinate S-adenosyl-L-methionine.

Belongs to the methyltransferase superfamily. UbiG/COQ3 family.

The enzyme catalyses a 3-demethylubiquinol + S-adenosyl-L-methionine = a ubiquinol + S-adenosyl-L-homocysteine + H(+). It carries out the reaction a 3-(all-trans-polyprenyl)benzene-1,2-diol + S-adenosyl-L-methionine = a 2-methoxy-6-(all-trans-polyprenyl)phenol + S-adenosyl-L-homocysteine + H(+). The protein operates within cofactor biosynthesis; ubiquinone biosynthesis. Functionally, O-methyltransferase that catalyzes the 2 O-methylation steps in the ubiquinone biosynthetic pathway. This is Ubiquinone biosynthesis O-methyltransferase from Brucella abortus (strain 2308).